Consider the following 513-residue polypeptide: Xylose import ATP-binding protein XylG (513 aa).

ABC transporter domains lie at L5 to E242 and L259 to E505. G37–S44 provides a ligand contact to ATP.

The protein belongs to the ABC transporter superfamily. Xylose importer (TC 3.A.1.2.4) family. The complex is composed of two ATP-binding proteins (XylG), two transmembrane proteins (XylH) and a solute-binding protein (XylF).

It localises to the cell inner membrane. It carries out the reaction D-xylose(out) + ATP + H2O = D-xylose(in) + ADP + phosphate + H(+). In terms of biological role, part of the ABC transporter complex XylFGH involved in xylose import. Responsible for energy coupling to the transport system. This is Xylose import ATP-binding protein XylG from Escherichia coli (strain UTI89 / UPEC).